A 55-amino-acid polypeptide reads, in one-letter code: DQGRDANCNYEFPGCPRNLEPVCGTDGNTYNNECLLCMENKKRDVPIRIQKDGPC.

In terms of domain architecture, Kazal-like spans 2 to 55 (QGRDANCNYEFPGCPRNLEPVCGTDGNTYNNECLLCMENKKRDVPIRIQKDGPC). Cystine bridges form between Cys-8-Cys-37, Cys-15-Cys-34, and Cys-23-Cys-55.

Its subcellular location is the secreted. In terms of biological role, serine protease inhibitor which exhibits anti-trypsin activity. In the pancreas, protects against trypsin-catalyzed premature activation of zymogens. Functionally, in the male reproductive tract, binds to sperm heads where it modulates sperm capacitance by inhibiting calcium uptake and nitrogen oxide (NO) production. The sequence is that of Serine protease inhibitor Kazal-type 1 (SPINK1) from Monodelphis domestica (Gray short-tailed opossum).